We begin with the raw amino-acid sequence, 347 residues long: Ribosomal RNA large subunit methyltransferase M (347 aa).

S-adenosyl-L-methionine-binding positions include S184, A217 to G220, D236, D256, and D272. K301 functions as the Proton acceptor in the catalytic mechanism.

Belongs to the class I-like SAM-binding methyltransferase superfamily. RNA methyltransferase RlmE family. RlmM subfamily. In terms of assembly, monomer.

Its subcellular location is the cytoplasm. It catalyses the reaction cytidine(2498) in 23S rRNA + S-adenosyl-L-methionine = 2'-O-methylcytidine(2498) in 23S rRNA + S-adenosyl-L-homocysteine + H(+). In terms of biological role, catalyzes the 2'-O-methylation at nucleotide C2498 in 23S rRNA. This chain is Ribosomal RNA large subunit methyltransferase M, found in Xanthomonas axonopodis pv. citri (strain 306).